The chain runs to 215 residues: Probable phosphoglycerate mutase GpmB (215 aa).

Substrate contacts are provided by residues 8-15 (RHGETEWN), 21-22 (QG), Arg58, Arg60, 82-85 (ELHM), and 151-152 (GI). His9 (tele-phosphohistidine intermediate) is an active-site residue. Glu82 (proton donor/acceptor) is an active-site residue.

Belongs to the phosphoglycerate mutase family. GpmB subfamily.

The catalysed reaction is (2R)-2-phosphoglycerate = (2R)-3-phosphoglycerate. It functions in the pathway carbohydrate degradation; glycolysis; pyruvate from D-glyceraldehyde 3-phosphate: step 3/5. In Serratia proteamaculans (strain 568), this protein is Probable phosphoglycerate mutase GpmB.